Here is a 123-residue protein sequence, read N- to C-terminus: Small ribosomal subunit protein uS12 (123 aa).

Aspartate 89 is subject to 3-methylthioaspartic acid.

It belongs to the universal ribosomal protein uS12 family. In terms of assembly, part of the 30S ribosomal subunit. Contacts proteins S8 and S17. May interact with IF1 in the 30S initiation complex.

In terms of biological role, with S4 and S5 plays an important role in translational accuracy. Interacts with and stabilizes bases of the 16S rRNA that are involved in tRNA selection in the A site and with the mRNA backbone. Located at the interface of the 30S and 50S subunits, it traverses the body of the 30S subunit contacting proteins on the other side and probably holding the rRNA structure together. The combined cluster of proteins S8, S12 and S17 appears to hold together the shoulder and platform of the 30S subunit. This Bifidobacterium animalis subsp. lactis (strain AD011) protein is Small ribosomal subunit protein uS12.